The primary structure comprises 331 residues: Adenosine deaminase (331 aa).

The Zn(2+) site is built by histidine 12 and histidine 14. 3 residues coordinate substrate: histidine 14, aspartate 16, and glycine 170. Histidine 197 lines the Zn(2+) pocket. The active-site Proton donor is glutamate 200. Zn(2+) is bound at residue aspartate 278. Aspartate 279 is a substrate binding site.

The protein belongs to the metallo-dependent hydrolases superfamily. Adenosine and AMP deaminases family. Adenosine deaminase subfamily. Requires Zn(2+) as cofactor.

The enzyme catalyses adenosine + H2O + H(+) = inosine + NH4(+). It carries out the reaction 2'-deoxyadenosine + H2O + H(+) = 2'-deoxyinosine + NH4(+). In terms of biological role, catalyzes the hydrolytic deamination of adenosine and 2-deoxyadenosine. This is Adenosine deaminase from Shewanella baltica (strain OS223).